The following is a 92-amino-acid chain: MWPVLWTVVRTYAPYVTFPVAFVVGAVGYHLEWFIRGKTPQPVEEEKSILERREDRKLDEMLGKDHTQVVSLKDKLEFAPKAVLNRNRPEKN.

The chain crosses the membrane as a helical span at residues 15-34 (YVTFPVAFVVGAVGYHLEWF).

Belongs to the SMIM12 family.

The protein localises to the membrane. This chain is Small integral membrane protein 12 (Smim12), found in Mus musculus (Mouse).